A 356-amino-acid chain; its full sequence is S-adenosylmethionine:tRNA ribosyltransferase-isomerase (356 aa).

It belongs to the QueA family. Monomer.

It is found in the cytoplasm. The enzyme catalyses 7-aminomethyl-7-carbaguanosine(34) in tRNA + S-adenosyl-L-methionine = epoxyqueuosine(34) in tRNA + adenine + L-methionine + 2 H(+). It functions in the pathway tRNA modification; tRNA-queuosine biosynthesis. Transfers and isomerizes the ribose moiety from AdoMet to the 7-aminomethyl group of 7-deazaguanine (preQ1-tRNA) to give epoxyqueuosine (oQ-tRNA). In Salmonella arizonae (strain ATCC BAA-731 / CDC346-86 / RSK2980), this protein is S-adenosylmethionine:tRNA ribosyltransferase-isomerase.